The chain runs to 591 residues: Aspartate--tRNA(Asp/Asn) ligase (591 aa).

E175 serves as a coordination point for L-aspartate. An aspartate region spans residues 199 to 202 (QQFK). L-aspartate-binding residues include R221 and H453. Position 221–223 (221–223 (RDE)) interacts with ATP. Position 486 (E486) interacts with ATP. Position 493 (R493) interacts with L-aspartate. 538–541 (GIDR) provides a ligand contact to ATP.

The protein belongs to the class-II aminoacyl-tRNA synthetase family. Type 1 subfamily. In terms of assembly, homodimer.

Its subcellular location is the cytoplasm. The enzyme catalyses tRNA(Asx) + L-aspartate + ATP = L-aspartyl-tRNA(Asx) + AMP + diphosphate. Aspartyl-tRNA synthetase with relaxed tRNA specificity since it is able to aspartylate not only its cognate tRNA(Asp) but also tRNA(Asn). Reaction proceeds in two steps: L-aspartate is first activated by ATP to form Asp-AMP and then transferred to the acceptor end of tRNA(Asp/Asn). This Cereibacter sphaeroides (strain ATCC 17029 / ATH 2.4.9) (Rhodobacter sphaeroides) protein is Aspartate--tRNA(Asp/Asn) ligase.